The following is a 499-amino-acid chain: Lysine--tRNA ligase (499 aa).

Residues E403 and E410 each contribute to the Mg(2+) site.

This sequence belongs to the class-II aminoacyl-tRNA synthetase family. As to quaternary structure, homodimer. It depends on Mg(2+) as a cofactor.

The protein resides in the cytoplasm. The catalysed reaction is tRNA(Lys) + L-lysine + ATP = L-lysyl-tRNA(Lys) + AMP + diphosphate. The protein is Lysine--tRNA ligase of Campylobacter hominis (strain ATCC BAA-381 / DSM 21671 / CCUG 45161 / LMG 19568 / NCTC 13146 / CH001A).